Consider the following 130-residue polypeptide: Phosphoribosyl-AMP cyclohydrolase (130 aa).

Position 80 (Asp-80) interacts with Mg(2+). Cys-81 is a Zn(2+) binding site. Residues Asp-82 and Asp-84 each contribute to the Mg(2+) site. Zn(2+) is bound by residues Cys-98 and Cys-105.

Belongs to the PRA-CH family. Homodimer. Requires Mg(2+) as cofactor. Zn(2+) serves as cofactor.

Its subcellular location is the cytoplasm. It carries out the reaction 1-(5-phospho-beta-D-ribosyl)-5'-AMP + H2O = 1-(5-phospho-beta-D-ribosyl)-5-[(5-phospho-beta-D-ribosylamino)methylideneamino]imidazole-4-carboxamide. It functions in the pathway amino-acid biosynthesis; L-histidine biosynthesis; L-histidine from 5-phospho-alpha-D-ribose 1-diphosphate: step 3/9. Catalyzes the hydrolysis of the adenine ring of phosphoribosyl-AMP. This chain is Phosphoribosyl-AMP cyclohydrolase, found in Oleidesulfovibrio alaskensis (strain ATCC BAA-1058 / DSM 17464 / G20) (Desulfovibrio alaskensis).